A 761-amino-acid polypeptide reads, in one-letter code: Phosphoribosylformylglycinamidine synthase subunit PurL (761 aa).

His58 is an active-site residue. Tyr61 and Lys105 together coordinate ATP. Glu107 serves as a coordination point for Mg(2+). Substrate is bound by residues 108–111 (SHNH) and Arg130. His109 functions as the Proton acceptor in the catalytic mechanism. Asp131 contributes to the Mg(2+) binding site. Residue Gln259 coordinates substrate. Asp287 provides a ligand contact to Mg(2+). 331–333 (ESQ) lines the substrate pocket. ATP is bound by residues Asn519 and Gly556. Position 557 (Asn557) interacts with Mg(2+). Position 559 (Ser559) interacts with substrate.

Belongs to the FGAMS family. In terms of assembly, monomer. Part of the FGAM synthase complex composed of 1 PurL, 1 PurQ and 2 PurS subunits.

The protein localises to the cytoplasm. The enzyme catalyses N(2)-formyl-N(1)-(5-phospho-beta-D-ribosyl)glycinamide + L-glutamine + ATP + H2O = 2-formamido-N(1)-(5-O-phospho-beta-D-ribosyl)acetamidine + L-glutamate + ADP + phosphate + H(+). It functions in the pathway purine metabolism; IMP biosynthesis via de novo pathway; 5-amino-1-(5-phospho-D-ribosyl)imidazole from N(2)-formyl-N(1)-(5-phospho-D-ribosyl)glycinamide: step 1/2. Functionally, part of the phosphoribosylformylglycinamidine synthase complex involved in the purines biosynthetic pathway. Catalyzes the ATP-dependent conversion of formylglycinamide ribonucleotide (FGAR) and glutamine to yield formylglycinamidine ribonucleotide (FGAM) and glutamate. The FGAM synthase complex is composed of three subunits. PurQ produces an ammonia molecule by converting glutamine to glutamate. PurL transfers the ammonia molecule to FGAR to form FGAM in an ATP-dependent manner. PurS interacts with PurQ and PurL and is thought to assist in the transfer of the ammonia molecule from PurQ to PurL. The protein is Phosphoribosylformylglycinamidine synthase subunit PurL of Rhodococcus jostii (strain RHA1).